A 283-amino-acid chain; its full sequence is Shikimate dehydrogenase (NADP(+)) (283 aa).

Shikimate-binding positions include 19-21 (SFS) and T66. Residue K70 is the Proton acceptor of the active site. E82 is an NADP(+) binding site. The shikimate site is built by N91 and D106. Residues 129 to 133 (GAGGA) and I225 each bind NADP(+). Y227 is a binding site for shikimate. Position 248 (G248) interacts with NADP(+).

It belongs to the shikimate dehydrogenase family. As to quaternary structure, homodimer.

The enzyme catalyses shikimate + NADP(+) = 3-dehydroshikimate + NADPH + H(+). Its pathway is metabolic intermediate biosynthesis; chorismate biosynthesis; chorismate from D-erythrose 4-phosphate and phosphoenolpyruvate: step 4/7. Involved in the biosynthesis of the chorismate, which leads to the biosynthesis of aromatic amino acids. Catalyzes the reversible NADPH linked reduction of 3-dehydroshikimate (DHSA) to yield shikimate (SA). In Methanosphaera stadtmanae (strain ATCC 43021 / DSM 3091 / JCM 11832 / MCB-3), this protein is Shikimate dehydrogenase (NADP(+)).